We begin with the raw amino-acid sequence, 384 residues long: BarH-like 2 homeobox protein (384 aa).

Disordered regions lie at residues 1–134 (MTAM…APRT), 154–235 (CAPY…ARTA), and 364–384 (PGGQPALNPLSNPIPGTPHPR). 2 stretches are compositionally biased toward low complexity: residues 101 to 110 (VPAQSLQPSP) and 119 to 134 (QSAAQQLGSAAAAPRT). Positions 157 to 175 (YSTSVSSPHHTPKQESNAA) are enriched in polar residues. A compositionally biased stretch (basic and acidic residues) spans 177-217 (ESFRPKLEQEDGKTKLDKREDPQSDIKCHGTKEEGDREITS). Positions 229–288 (PRKARTAFSDHQLNQLERSFERQKYLSVQDRMDLAAALNLTDTQVKTWYQNRRTKWKRQT) form a DNA-binding region, homeobox.

This sequence belongs to the BAR homeobox family.

Its subcellular location is the nucleus. Potential regulator of neural basic helix-loop-helix genes. It may down-regulate expression of ASCL1 and, within the thalamus, up-regulate NGN2, thereby regulating distinct patterns of neuronal differentiation. The polypeptide is BarH-like 2 homeobox protein (Barhl2) (Mus musculus (Mouse)).